Consider the following 715-residue polypeptide: Fatty acid oxidation complex subunit alpha (715 aa).

The interval Met-1–Pro-190 is enoyl-CoA hydratase. Positions Gly-306–Gly-714 are 3-hydroxyacyl-CoA dehydrogenase.

In the N-terminal section; belongs to the enoyl-CoA hydratase/isomerase family. This sequence in the central section; belongs to the 3-hydroxyacyl-CoA dehydrogenase family. As to quaternary structure, heterotetramer of two alpha chains (FadJ) and two beta chains (FadI).

It localises to the cytoplasm. It carries out the reaction a (3S)-3-hydroxyacyl-CoA = a (2E)-enoyl-CoA + H2O. The catalysed reaction is a 4-saturated-(3S)-3-hydroxyacyl-CoA = a (3E)-enoyl-CoA + H2O. It catalyses the reaction a (3S)-3-hydroxyacyl-CoA + NAD(+) = a 3-oxoacyl-CoA + NADH + H(+). The enzyme catalyses (3S)-3-hydroxybutanoyl-CoA = (3R)-3-hydroxybutanoyl-CoA. Its pathway is lipid metabolism; fatty acid beta-oxidation. Its function is as follows. Catalyzes the formation of a hydroxyacyl-CoA by addition of water on enoyl-CoA. Also exhibits 3-hydroxyacyl-CoA epimerase and 3-hydroxyacyl-CoA dehydrogenase activities. The protein is Fatty acid oxidation complex subunit alpha of Salmonella paratyphi A (strain ATCC 9150 / SARB42).